A 115-amino-acid chain; its full sequence is U3-lycotoxin-Ls1k (115 aa).

The N-terminal stretch at 1–20 (MKSVLLFGVLLVTLFSYSSA) is a signal peptide. The propeptide occupies 21-44 (EMLDDFDQADEDELLSLIEKEEAR). 4 disulfides stabilise this stretch: C48–C63, C55–C72, C62–C87, and C74–C85.

Belongs to the neurotoxin 19 (CSTX) family. 01 subfamily. In terms of tissue distribution, expressed by the venom gland.

It localises to the secreted. In Lycosa singoriensis (Wolf spider), this protein is U3-lycotoxin-Ls1k.